The chain runs to 357 residues: Ketoreductase CTB6 (357 aa).

Tyrosine 172 provides a ligand contact to NADP(+).

It belongs to the NAD(P)-dependent epimerase/dehydratase family. Dihydroflavonol-4-reductase subfamily.

Its pathway is mycotoxin biosynthesis. Its function is as follows. Ketoreductase; part of the gene cluster that mediates the biosynthesis of cercosporin, a light-activated, non-host-selective toxin. The perylenequinone chromophore of cercosporin absorbs light energy to attain an electronically-activated triplet state and produces active oxygen species such as the hydroxyl radical, superoxide, hydrogen peroxide or singlet oxygen upon reaction with oxygen molecules. These reactive oxygen species cause damage to various cellular components including lipids, proteins and nucleic acids. The first step of cercosporin biosynthesis is performed by the polyketide synthase CTB1 which catalyzes the formation of nor-toralactone. The starter unit acyltransferase (SAT) domain of CTB1 initiates polyketide extension by the selective utilization of acetyl-CoA, which is elongated to the heptaketide in the beta-ketoacyl synthase (KS) domain by successive condensations with six malonyl units introduced by the malonyl acyltransferase (MAT) domain. The product template (PT) domain catalyzes C4-C9 and C2-C11 aldol cyclizations and dehydrations to a trihydroxynaphthalene, which is thought to be delivered to the thioesterase (TE) domain for product release. The bifunctional enzyme CTB3 then methylates nor-toralactone to toralactone before conducting an unusual oxidative aromatic ring opening. The O-methyltransferase CTB2 further methylates the nascent OH-6 of the CBT3 product, blocking further oxidation at this site before the reductase CTB6 reduces the 2-oxopropyl ketone at position C7, giving naphthalene. The FAD-dependent monooxygenase CTB5 in concert with the multicopper oxidase CTB12 are responsible for homodimerization of naphthalene with CTB7 installing the dioxepine moiety, finally producing cercosporin. The fasciclin domain-containing protein CTB11 might act with CTB5 and CTB12 whereas the roles of CTB9 and CTB10 have still to be elucidated. This Cercospora beticola (Sugarbeet leaf spot fungus) protein is Ketoreductase CTB6.